We begin with the raw amino-acid sequence, 428 residues long: Glutamyl-tRNA reductase (428 aa).

Residues 49–52 (TCNR), S109, 114–116 (EGQ), and Q120 each bind substrate. The active-site Nucleophile is the C50. 189–194 (GAGKMS) is a binding site for NADP(+).

It belongs to the glutamyl-tRNA reductase family. As to quaternary structure, homodimer.

It carries out the reaction (S)-4-amino-5-oxopentanoate + tRNA(Glu) + NADP(+) = L-glutamyl-tRNA(Glu) + NADPH + H(+). It functions in the pathway porphyrin-containing compound metabolism; protoporphyrin-IX biosynthesis; 5-aminolevulinate from L-glutamyl-tRNA(Glu): step 1/2. It participates in porphyrin-containing compound metabolism; chlorophyll biosynthesis. Functionally, catalyzes the NADPH-dependent reduction of glutamyl-tRNA(Glu) to glutamate 1-semialdehyde (GSA). This is Glutamyl-tRNA reductase from Microcystis aeruginosa (strain NIES-843 / IAM M-2473).